Reading from the N-terminus, the 381-residue chain is E3 ubiquitin-protein ligase KCMF1 (381 aa).

S2 is modified (N-acetylserine). S2 is modified (phosphoserine). The ZZ-type zinc-finger motif lies at 4 to 60 (HEGVSCDACLKGNFRGRRYKCLICYDYDLCASCYESGATTTRHTTDHPMQCILTRVD). Residues C9, C12, C24, C27, C33, C36, H46, and H50 each contribute to the Zn(2+) site. The C2H2-type zinc-finger motif lies at 78-101 (FTCPYCGKMGYTETSLQEHVTSEH). A disordered region spans residues 154–194 (MFHPGRGLGGPRARRSNMHFTSSSTGGLSSSQSSYSPSSRE). A phosphoserine mark is found at S169, S189, and S212. Positions 175–192 (SSSTGGLSSSQSSYSPSS) are enriched in low complexity. Positions 224-259 (ASQLQQLQMQLQLERQHAQAARQQLETARNASRRTN) form a coiled coil. Phosphoserine occurs at positions 335 and 336.

It belongs to the KCMF1 family. As to quaternary structure, component of the SIFI complex, composed of KCMF1, UBR4 and calmodulin (CALM1, CALM2 or CALM3). Testis, liver, kidney, heart and skeletal muscle.

It is found in the cytoplasm. Its subcellular location is the late endosome. The protein resides in the lysosome. The catalysed reaction is S-ubiquitinyl-[E2 ubiquitin-conjugating enzyme]-L-cysteine + [acceptor protein]-L-lysine = [E2 ubiquitin-conjugating enzyme]-L-cysteine + N(6)-ubiquitinyl-[acceptor protein]-L-lysine.. It participates in protein modification; protein ubiquitination. E3 ubiquitin-protein ligase which accepts ubiquitin from an E2 ubiquitin-conjugating enzyme and then transfers it to targeted substrates, promoting their degradation by the proteasome. Together with UBR4, component of the N-end rule pathway: ubiquitinates proteins bearing specific N-terminal residues that are destabilizing according to the N-end rule, leading to their degradation. Does not ubiquitinate proteins that are acetylated at the N-terminus. Together with UBR4, part of a protein quality control pathway that catalyzes ubiquitination and degradation of proteins that have been oxidized in response to reactive oxygen species (ROS): recognizes proteins with an Arg-CysO3(H) degron at the N-terminus, and mediates assembly of heterotypic 'Lys-63'-/'Lys-27'-linked branched ubiquitin chains on oxidized proteins, leading to their degradation by autophagy. Catalytic component of the SIFI complex, a multiprotein complex required to inhibit the mitochondrial stress response after a specific stress event has been resolved: ubiquitinates and degrades (1) components of the HRI-mediated signaling of the integrated stress response, such as DELE1 and EIF2AK1/HRI, as well as (2) unimported mitochondrial precursors. Within the SIFI complex, UBR4 initiates ubiquitin chain that are further elongated or branched by KCMF1. This chain is E3 ubiquitin-protein ligase KCMF1, found in Mus musculus (Mouse).